A 1356-amino-acid chain; its full sequence is Vegetative incompatibility protein HET-E-1 (1356 aa).

One can recognise an NACHT domain in the interval 294–629 (RLLWINGDPG…DFLLGTASDK (336 aa)). 300–307 (GDPGKGKT) serves as a coordination point for GTP. 10 WD repeats span residues 839 to 869 (GHGS…KIWD), 881 to 911 (GHGG…KIWD), 923 to 953 (GHGG…KIWD), 965 to 995 (GHGS…KIWD), 1007 to 1037 (GHGG…KIWD), 1049 to 1079 (GHGG…KIWD), 1091 to 1121 (GHGD…KIWD), 1133 to 1163 (GHGG…KIWD), 1175 to 1205 (GHGG…KIWD), and 1217 to 1247 (GHGG…KIWD).

In terms of biological role, responsible for vegetative incompatibility through specific interactions with different alleles of the unlinked gene, het-c. The chain is Vegetative incompatibility protein HET-E-1 (HET-E1) from Podospora anserina (Pleurage anserina).